We begin with the raw amino-acid sequence, 333 residues long: Phosphate acyltransferase (333 aa).

Belongs to the PlsX family. In terms of assembly, homodimer. Probably interacts with PlsY.

It localises to the cytoplasm. It catalyses the reaction a fatty acyl-[ACP] + phosphate = an acyl phosphate + holo-[ACP]. It functions in the pathway lipid metabolism; phospholipid metabolism. Catalyzes the reversible formation of acyl-phosphate (acyl-PO(4)) from acyl-[acyl-carrier-protein] (acyl-ACP). This enzyme utilizes acyl-ACP as fatty acyl donor, but not acyl-CoA. This is Phosphate acyltransferase from Bacillus subtilis (strain 168).